We begin with the raw amino-acid sequence, 344 residues long: Uroporphyrinogen decarboxylase (344 aa).

Substrate is bound by residues 27 to 31 (RQAGR), Phe46, Asp77, Tyr153, Thr208, and His324.

The protein belongs to the uroporphyrinogen decarboxylase family. In terms of assembly, homodimer.

It is found in the cytoplasm. It carries out the reaction uroporphyrinogen III + 4 H(+) = coproporphyrinogen III + 4 CO2. It participates in porphyrin-containing compound metabolism; protoporphyrin-IX biosynthesis; coproporphyrinogen-III from 5-aminolevulinate: step 4/4. Functionally, catalyzes the decarboxylation of four acetate groups of uroporphyrinogen-III to yield coproporphyrinogen-III. In Bradyrhizobium diazoefficiens (strain JCM 10833 / BCRC 13528 / IAM 13628 / NBRC 14792 / USDA 110), this protein is Uroporphyrinogen decarboxylase.